The chain runs to 221 residues: NAD(P)H-hydrate epimerase (221 aa).

The YjeF N-terminal domain maps to 10–211 (MQQYDQYTIN…DIGIYSPAEL (202 aa)). 58–62 (NNGGD) contributes to the (6S)-NADPHX binding site. K(+)-binding residues include asparagine 59 and aspartate 121. Residues 125–131 (GIGLSKP) and aspartate 154 each bind (6S)-NADPHX. Serine 157 is a K(+) binding site.

Belongs to the NnrE/AIBP family. Requires K(+) as cofactor.

The enzyme catalyses (6R)-NADHX = (6S)-NADHX. It carries out the reaction (6R)-NADPHX = (6S)-NADPHX. Its function is as follows. Catalyzes the epimerization of the S- and R-forms of NAD(P)HX, a damaged form of NAD(P)H that is a result of enzymatic or heat-dependent hydration. This is a prerequisite for the S-specific NAD(P)H-hydrate dehydratase to allow the repair of both epimers of NAD(P)HX. This is NAD(P)H-hydrate epimerase from Weissella koreensis (strain KACC 15510).